The primary structure comprises 185 residues: ATP-dependent protease subunit HslV (185 aa).

Residue T14 is part of the active site. Residues A168, C171, and T174 each contribute to the Na(+) site.

It belongs to the peptidase T1B family. HslV subfamily. A double ring-shaped homohexamer of HslV is capped on each side by a ring-shaped HslU homohexamer. The assembly of the HslU/HslV complex is dependent on binding of ATP.

The protein resides in the cytoplasm. The enzyme catalyses ATP-dependent cleavage of peptide bonds with broad specificity.. Allosterically activated by HslU binding. In terms of biological role, protease subunit of a proteasome-like degradation complex believed to be a general protein degrading machinery. In Hyphomonas neptunium (strain ATCC 15444), this protein is ATP-dependent protease subunit HslV.